The primary structure comprises 350 residues: S-adenosylmethionine:tRNA ribosyltransferase-isomerase (350 aa).

Belongs to the QueA family. As to quaternary structure, monomer.

It is found in the cytoplasm. It catalyses the reaction 7-aminomethyl-7-carbaguanosine(34) in tRNA + S-adenosyl-L-methionine = epoxyqueuosine(34) in tRNA + adenine + L-methionine + 2 H(+). It participates in tRNA modification; tRNA-queuosine biosynthesis. Its function is as follows. Transfers and isomerizes the ribose moiety from AdoMet to the 7-aminomethyl group of 7-deazaguanine (preQ1-tRNA) to give epoxyqueuosine (oQ-tRNA). In Bacillus cereus (strain G9842), this protein is S-adenosylmethionine:tRNA ribosyltransferase-isomerase.